Reading from the N-terminus, the 484-residue chain is Magnesium transporter MRS2-3 (484 aa).

Disordered regions lie at residues 1–40 and 141–186; these read MRGA…GRKK and TKPQ…QSLE. The segment covering 10–24 has biased composition (polar residues); the sequence is NFSTNPSTPNTGQPT. Residues 203-275 are a coiled coil; it reads ACLEAASSSL…LLDDDEDMAE (73 aa). The tract at residues 286–320 is disordered; it reads LEDSSNSSMNESDTFEVDLPQGDEDDRLPPEFASE. The span at 298 to 311 shows a compositional bias: acidic residues; the sequence is DTFEVDLPQGDEDD. A helical transmembrane segment spans residues 416–436; the sequence is GVMLTTATLVMSAFIAVAGVF. Positions 437–439 match the Required for magnesium transport activity motif; that stretch reads GMN. A helical membrane pass occupies residues 455 to 475; that stretch reads FIWTVIGGSIGSICLYVGAIG.

The protein belongs to the CorA metal ion transporter (MIT) (TC 1.A.35.5) family. In terms of tissue distribution, expressed in the whole plant.

It is found in the membrane. Its function is as follows. Magnesium transporter that may mediate the influx of magnesium. The polypeptide is Magnesium transporter MRS2-3 (MRS2-3) (Arabidopsis thaliana (Mouse-ear cress)).